The primary structure comprises 1016 residues: Probably inactive leucine-rich repeat receptor-like protein kinase At3g28040 (1016 aa).

The first 26 residues, 1 to 26, serve as a signal peptide directing secretion; the sequence is MGKQRRTMISFTLFLTLTMMSSLING. The Extracellular segment spans residues 27-646; the sequence is DTDSIQLNDD…FHRRMFLSVS (620 aa). LRR repeat units follow at residues 102–124, 125–147, 149–171, 174–196, 198–219, 224–245, 248–270, 272–295, 296–318, 320–342, 344–366, 368–390, 391–413, 416–438, 440–462, 464–486, 488–510, 512–535, 536–559, and 560–582; these read RLKV…SNNN, HLQK…LGSI, SLQH…LFNN, SLRY…LFRC, VLNS…VSGI, RLRA…GILS, NLKE…IGLC, HLNR…QKLK, SLNH…IGDM, GLVH…ISNL, SLKD…LESC, ELMI…FFDL, GLQE…SSRL, SLIR…VGLF, HMRY…IEFL, NLTV…ICES, SLQI…IGNC, SLKL…SNLQ, ELKI…GDLQ, and NLLL…DVFQ. N-linked (GlcNAc...) asparagine glycosylation is found at Asn112, Asn135, and Asn171. Asn203 carries N-linked (GlcNAc...) asparagine glycosylation. Asn349 carries an N-linked (GlcNAc...) asparagine glycan. 4 N-linked (GlcNAc...) asparagine glycosylation sites follow: Asn445, Asn464, Asn509, and Asn522. N-linked (GlcNAc...) asparagine glycosylation occurs at Asn565. The chain crosses the membrane as a helical span at residues 647 to 667; it reads VIVAISAAILIFSGVIIITLL. Residues 668 to 1016 are Cytoplasmic-facing; it reads NASVRRRLAF…PVPHRIMDSF (349 aa). The region spanning 726 to 1013 is the Protein kinase domain; the sequence is LNKASRIGEG…INSPVPHRIM (288 aa). Residues 732-740 and Lys755 contribute to the ATP site; that span reads IGEGVFGTV. 2 positions are modified to phosphotyrosine: Tyr841 and Tyr898.

Belongs to the protein kinase superfamily. Ser/Thr protein kinase family.

Its subcellular location is the membrane. The protein is Probably inactive leucine-rich repeat receptor-like protein kinase At3g28040 of Arabidopsis thaliana (Mouse-ear cress).